The following is a 248-amino-acid chain: PF03932 family protein CutC (248 aa).

This sequence belongs to the CutC family. As to quaternary structure, homodimer.

Its subcellular location is the cytoplasm. This is PF03932 family protein CutC from Escherichia coli (strain SMS-3-5 / SECEC).